The primary structure comprises 328 residues: Oligopeptide transport ATP-binding protein AppD (328 aa).

The region spanning 5–256 (LEVNNLKTYF…PLHPYTEGLL (252 aa)) is the ABC transporter domain. Residue 41 to 48 (GESGSGKS) participates in ATP binding.

This sequence belongs to the ABC transporter superfamily.

The protein resides in the cell membrane. This protein is a component of an oligopeptide permease, a binding protein-dependent transport system. This APP system can completely substitute for the OPP system in both sporulation and genetic competence, though, unlike OPP, is incapable of transporting tripeptides. Probably responsible for energy coupling to the transport system. The chain is Oligopeptide transport ATP-binding protein AppD (appD) from Bacillus subtilis (strain 168).